The primary structure comprises 450 residues: Cysteine protease ATG4C (450 aa).

C112 (nucleophile) is an active-site residue. Active-site residues include D336 and H338.

It belongs to the peptidase C54 family.

It is found in the cytoplasm. The catalysed reaction is [protein]-C-terminal L-amino acid-glycyl-phosphatidylethanolamide + H2O = [protein]-C-terminal L-amino acid-glycine + a 1,2-diacyl-sn-glycero-3-phosphoethanolamine. Cysteine protease that plays a key role in autophagy by mediating both proteolytic activation and delipidation of ATG8 family proteins. The protease activity is required for proteolytic activation of ATG8 family proteins: cleaves the C-terminal amino acid of ATG8 proteins to reveal a C-terminal glycine. Exposure of the glycine at the C-terminus is essential for ATG8 proteins conjugation to phosphatidylethanolamine (PE) and insertion to membranes, which is necessary for autophagy. In addition to the protease activity, also mediates delipidation of ATG8 family proteins. Catalyzes delipidation of PE-conjugated forms of ATG8 proteins during macroautophagy. The protein is Cysteine protease ATG4C of Xenopus tropicalis (Western clawed frog).